A 109-amino-acid chain; its full sequence is MRSESEVSISTVFLGEYVGDDEKSLGILMGGSTSCMVGMNSAFVNDTIRLDLPTPSSPQITTRIVSLVIVLFNTLVFRSPLFLFSIFICLIYKFHSCFEGKPLYQMLKI.

2 consecutive transmembrane segments (helical) span residues 24 to 44 and 68 to 88; these read SLGI…SAFV and VIVL…SIFI.

The protein localises to the membrane. This is an uncharacterized protein from Saccharomyces cerevisiae (strain ATCC 204508 / S288c) (Baker's yeast).